A 64-amino-acid polypeptide reads, in one-letter code: MNFSRIFFFVFACLTALAMVNAAPEPKWKLFKKIEKVGQNIRDGIIKAGPAVAVVGQATQIAKG.

An N-terminal signal peptide occupies residues 1 to 22 (MNFSRIFFFVFACLTALAMVNA). A propeptide spans 23-26 (APEP) (removed by a dipeptidylpeptidase). Lysine 63 is subject to Lysine amide.

The protein belongs to the cecropin family. In terms of processing, a protein with the same sequence as cecropin A, but lacking the carboxyl blocking group, has been isolated and called cecropin C.

It localises to the secreted. In terms of biological role, cecropins have lytic and antibacterial activity against several Gram-positive and Gram-negative bacteria. This chain is Cecropin-A, found in Hyalophora cecropia (Cecropia moth).